The sequence spans 120 residues: Ribosome-binding factor A (120 aa).

This sequence belongs to the RbfA family. As to quaternary structure, monomer. Binds 30S ribosomal subunits, but not 50S ribosomal subunits or 70S ribosomes.

It is found in the cytoplasm. Its function is as follows. One of several proteins that assist in the late maturation steps of the functional core of the 30S ribosomal subunit. Associates with free 30S ribosomal subunits (but not with 30S subunits that are part of 70S ribosomes or polysomes). Required for efficient processing of 16S rRNA. May interact with the 5'-terminal helix region of 16S rRNA. This is Ribosome-binding factor A from Lactobacillus delbrueckii subsp. bulgaricus (strain ATCC 11842 / DSM 20081 / BCRC 10696 / JCM 1002 / NBRC 13953 / NCIMB 11778 / NCTC 12712 / WDCM 00102 / Lb 14).